Consider the following 640-residue polypeptide: Threonine--tRNA ligase (640 aa).

The TGS domain occupies 1–59; that stretch reads MKIKVKLPDGKEKEYDRGITPAEIAKELGVKKAIGAVVNGELWDLKRPIENDCELRLVT. Positions 240-531 are catalytic; that stretch reads DHRKLGPHLE…LIEHFAGAFP (292 aa). The Zn(2+) site is built by Cys-332, His-383, and His-508.

This sequence belongs to the class-II aminoacyl-tRNA synthetase family. In terms of assembly, homodimer. Requires Zn(2+) as cofactor.

It localises to the cytoplasm. It carries out the reaction tRNA(Thr) + L-threonine + ATP = L-threonyl-tRNA(Thr) + AMP + diphosphate + H(+). Its function is as follows. Catalyzes the attachment of threonine to tRNA(Thr) in a two-step reaction: L-threonine is first activated by ATP to form Thr-AMP and then transferred to the acceptor end of tRNA(Thr). Also edits incorrectly charged L-seryl-tRNA(Thr). The chain is Threonine--tRNA ligase from Thermotoga sp. (strain RQ2).